A 301-amino-acid chain; its full sequence is Probable 5-dehydro-4-deoxyglucarate dehydratase (301 aa).

This sequence belongs to the DapA family.

The enzyme catalyses 5-dehydro-4-deoxy-D-glucarate + H(+) = 2,5-dioxopentanoate + CO2 + H2O. It participates in carbohydrate acid metabolism; D-glucarate degradation; 2,5-dioxopentanoate from D-glucarate: step 2/2. The sequence is that of Probable 5-dehydro-4-deoxyglucarate dehydratase from Chelativorans sp. (strain BNC1).